The chain runs to 538 residues: MEIKEISVPQQGVVADYMNGEKEIQSCFDYMLTEDAFKQRVQDLREREFFRQDLVAHLLEYNTKLQAGEATIQNVKALEDEDTYVVIAGQQAGLLTGPLYTIHKIISVLQLAKEKEESLGVKVVPVFWIAGEDHDMDEINHTFVTKNKKIKKTIFHDRNPKKASASESELSLEDCRKWIEEIFKTYPETNFTKDVLRFIDDSLGKSNTYVDFFGHLIMKMFINSGLILVDSHHPELRKLEVPFFKQIVSKYKEVQEGLHNQQEVIKELGYKPIIETKSNAVHIFMEIDNERVLLEDNQGKFVGKDGTYSFSYEELIEEMERSPERFSNNVVTRPLMQEYVFPTLAFIGGPGELAYWSELQQVFHTIGFRMPPVVPRITITYIERDIATDLHDLQLQESDPFLNNVDKLRENWLSNQIEEPIDERFVEAKKEIIDIHKSLQQFVKKIDPGLSSFAGKNEFKINEQIELLERMLKRNIEKKHEVELNKFRRIQFAIRPLGAPQERVWNVCYYLNQFGLDFVDRVMEKPFSWNGKHHVIKL.

A coiled-coil region spans residues Lys460–Asn485.

This sequence belongs to the BshC family.

Its function is as follows. Involved in bacillithiol (BSH) biosynthesis. May catalyze the last step of the pathway, the addition of cysteine to glucosamine malate (GlcN-Mal) to generate BSH. The polypeptide is Putative cysteine ligase BshC (Bacillus cereus (strain Q1)).